A 127-amino-acid chain; its full sequence is Glycine cleavage system H protein (127 aa).

The region spanning 22-104 (QVVIGITHFA…YEGAWMVKVE (83 aa)) is the Lipoyl-binding domain. At Lys63 the chain carries N6-lipoyllysine.

The protein belongs to the GcvH family. As to quaternary structure, the glycine cleavage system is composed of four proteins: P, T, L and H. (R)-lipoate is required as a cofactor.

Its function is as follows. The glycine cleavage system catalyzes the degradation of glycine. The H protein shuttles the methylamine group of glycine from the P protein to the T protein. Is also involved in protein lipoylation via its role as an octanoyl/lipoyl carrier protein intermediate. The polypeptide is Glycine cleavage system H protein (Bacillus cytotoxicus (strain DSM 22905 / CIP 110041 / 391-98 / NVH 391-98)).